The primary structure comprises 584 residues: A-type ATP synthase subunit A (584 aa).

Gly-233–Thr-240 serves as a coordination point for ATP.

It belongs to the ATPase alpha/beta chains family. In terms of assembly, has multiple subunits with at least A(3), B(3), C, D, E, F, H, I and proteolipid K(x).

It localises to the cell membrane. The enzyme catalyses ATP + H2O + 4 H(+)(in) = ADP + phosphate + 5 H(+)(out). Its function is as follows. Component of the A-type ATP synthase that produces ATP from ADP in the presence of a proton gradient across the membrane. The A chain is the catalytic subunit. The sequence is that of A-type ATP synthase subunit A from Methanobrevibacter smithii (strain ATCC 35061 / DSM 861 / OCM 144 / PS).